Reading from the N-terminus, the 254-residue chain is Cytochrome c oxidase subunit 2 (254 aa).

Residues 12-38 are Mitochondrial intermembrane-facing; it reads DAPEPWQICYQDSATKIMSGIDKLTGE. Residues 39 to 59 form a helical membrane-spanning segment; that stretch reads IFYYETLLLIIVGWVLISAII. Over 60-73 the chain is Mitochondrial matrix; sequence KYTKTELSYKYFNH. Residues 74 to 94 traverse the membrane as a helical segment; sequence GTLIEILWTCSPAFILIAISF. The Mitochondrial intermembrane segment spans residues 95-248; sequence PSFKLLYLMD…KYLEWLNIHL (154 aa). Cu cation is bound by residues histidine 182, cysteine 217, glutamate 219, cysteine 221, histidine 225, and methionine 228. Residue glutamate 219 participates in Mg(2+) binding.

It belongs to the cytochrome c oxidase subunit 2 family. As to quaternary structure, component of the cytochrome c oxidase (complex IV, CIV), a multisubunit enzyme composed of a catalytic core of 3 subunits and several supernumerary subunits. The complex exists as a monomer or a dimer and forms supercomplexes (SCs) in the inner mitochondrial membrane with ubiquinol-cytochrome c oxidoreductase (cytochrome b-c1 complex, complex III, CIII). Requires Cu cation as cofactor.

It localises to the mitochondrion inner membrane. The catalysed reaction is 4 Fe(II)-[cytochrome c] + O2 + 8 H(+)(in) = 4 Fe(III)-[cytochrome c] + 2 H2O + 4 H(+)(out). Its function is as follows. Component of the cytochrome c oxidase, the last enzyme in the mitochondrial electron transport chain which drives oxidative phosphorylation. The respiratory chain contains 3 multisubunit complexes succinate dehydrogenase (complex II, CII), ubiquinol-cytochrome c oxidoreductase (cytochrome b-c1 complex, complex III, CIII) and cytochrome c oxidase (complex IV, CIV), that cooperate to transfer electrons derived from NADH and succinate to molecular oxygen, creating an electrochemical gradient over the inner membrane that drives transmembrane transport and the ATP synthase. Cytochrome c oxidase is the component of the respiratory chain that catalyzes the reduction of oxygen to water. Electrons originating from reduced cytochrome c in the intermembrane space (IMS) are transferred via the dinuclear copper A center (CU(A)) of subunit 2 and heme A of subunit 1 to the active site in subunit 1, a binuclear center (BNC) formed by heme A3 and copper B (CU(B)). The BNC reduces molecular oxygen to 2 water molecules using 4 electrons from cytochrome c in the IMS and 4 protons from the mitochondrial matrix. This Zancudomyces culisetae (Gut fungus) protein is Cytochrome c oxidase subunit 2.